Here is a 311-residue protein sequence, read N- to C-terminus: Probable manganese-dependent inorganic pyrophosphatase (311 aa).

Positions 9, 13, 15, 77, 99, and 151 each coordinate Mn(2+).

This sequence belongs to the PPase class C family. Requires Mn(2+) as cofactor.

Its subcellular location is the cytoplasm. The catalysed reaction is diphosphate + H2O = 2 phosphate + H(+). The polypeptide is Probable manganese-dependent inorganic pyrophosphatase (Streptococcus pyogenes serotype M49 (strain NZ131)).